The sequence spans 684 residues: MSLSKRELDELKPWIEKTVKRVLGFSEPTVVTAALNCVGKGMDKKKAADHLKPFLDDSTLRFVDKLFEAVEEGRSSRHSKSNSDRNRKRELKDVFGDDSEVSKESSGVKKRRIPRFEEVEDEPEVIPGPPSESPGMLTKLQIKQMMEAATRQIEERKKQLSFISPPTPQPKISSSSQSERLPIGNTVQPSQAATFMNDAIEKARKAAELQARIQAQLALKPGLIGNANMVGLANLHAMGIAPPKVELKDQTKPTPLILDEQGRTVDATGKEIELTHRMPTLKANIRAVKREQFKQQLKEKPSEDMESNTYFDLRVSITPAQRQKRTFKFHEKGKFEKIAQRLRTKAQLKKLQAEISQAARKTGIHTSTKLALITPKKELKEGEIPEIEWWDSYIIPNGLDLKGGTSSKKDEYFGITNLVEHPAQLNPPVDSDTPVTLGVYLTKKEQKKLRRQTRREAQKELQEKVRLGLMPPPEPKVRISNLMRVLGTEAVQDPTKVEAHVRAQMAKRQKAHEEANAARKLTAEQRKAKKIKKLKEDVSQGVHIAVYRVRNLSNPAKKFKIEANAGQLYLTGVVVLHKDVNVVVVEGGPKAQKKFKRLMLHRIKWDEQTSNTKGEDDDESDEESVKKTNKCSLVWEGTAKDRSFGEMKFKQCPTENMAREHFKKHGAEHYWDLALSESVLESTD.

The PWI domain occupies 1–87; the sequence is MSLSKRELDE…HSKSNSDRNR (87 aa). A compositionally biased stretch (basic and acidic residues) spans 73–107; the sequence is GRSSRHSKSNSDRNRKRELKDVFGDDSEVSKESSG. Disordered stretches follow at residues 73 to 109 and 162 to 183; these read GRSSRHSKSNSDRNRKRELKDVFGDDSEVSKESSGVK and FISPPTPQPKISSSSQSERLPI. The span at 170 to 183 shows a compositional bias: polar residues; that stretch reads PKISSSSQSERLPI.

As to quaternary structure, component of the precatalytic spliceosome (spliceosome B complex). Component of the U4/U6-U5 tri-snRNP complex, a building block of the precatalytic spliceosome (spliceosome B complex). The U4/U6-U5 tri-snRNP complex is composed of the U4, U6 and U5 snRNAs and at least PRPF3, PRPF4, PRPF6, PRPF8, PRPF31, SNRNP200, TXNL4A, SNRNP40, SNRPB, SNRPD1, SNRPD2, SNRPD3, SNRPE, SNRPF, SNRPG, DDX23, CD2BP2, PPIH, SNU13, EFTUD2, SART1 and USP39, plus LSM2, LSM3, LSM4, LSM5, LSM6, LSM7 and LSM8.

The protein localises to the nucleus. It localises to the nucleus speckle. In terms of biological role, plays a role in pre-mRNA splicing as component of the U4/U6-U5 tri-snRNP complex that is involved in spliceosome assembly, and as component of the precatalytic spliceosome (spliceosome B complex). The chain is U4/U6 small nuclear ribonucleoprotein Prp3 (PRPF3) from Gallus gallus (Chicken).